The chain runs to 109 residues: Aquaporin-2 (109 aa).

Over 1–6 (SIAFSR) the chain is Cytoplasmic. A helical transmembrane segment spans residues 7-27 (AVFAEFLATLIFVFFGLGSAL). Residues 28–35 (NWQQSLPS) lie on the Extracellular side of the membrane. A helical membrane pass occupies residues 36-54 (VLQIAMAFGLAIGTLVQAL). Residues 55–59 (GHISG) lie on the Cytoplasmic side of the membrane. An intramembrane region (discontinuously helical) is located at residues 60–69 (AHINPAVTVA). The NPA 1 signature appears at 63–65 (NPA). At 70 to 80 (CLVGCHVSFLR) the chain is on the cytoplasmic side. The helical transmembrane segment at 81 to 102 (AAFYVAAQLLGAVAGAALLHEV) threads the bilayer. Residues 103-109 (TPSDVRG) lie on the Extracellular side of the membrane.

This sequence belongs to the MIP/aquaporin (TC 1.A.8) family. Homotetramer. Post-translationally, serine phosphorylation is necessary and sufficient for expression at the apical membrane. Endocytosis is not phosphorylation-dependent. In terms of processing, N-glycosylated.

The protein resides in the apical cell membrane. The protein localises to the basolateral cell membrane. Its subcellular location is the cell membrane. It is found in the cytoplasmic vesicle membrane. It localises to the golgi apparatus. The protein resides in the trans-Golgi network membrane. The catalysed reaction is H2O(in) = H2O(out). The enzyme catalyses glycerol(in) = glycerol(out). Functionally, forms a water-specific channel that provides the plasma membranes of renal collecting duct with high permeability to water, thereby permitting water to move in the direction of an osmotic gradient. Plays an essential role in renal water homeostasis. Could also be permeable to glycerol. The polypeptide is Aquaporin-2 (Talpa europaea (European mole)).